Consider the following 166-residue polypeptide: Ureidoglycolate lyase (166 aa).

This sequence belongs to the ureidoglycolate lyase family. Homodimer. The cofactor is Ni(2+).

It carries out the reaction (S)-ureidoglycolate = urea + glyoxylate. The protein operates within nitrogen metabolism; (S)-allantoin degradation. Catalyzes the catabolism of the allantoin degradation intermediate (S)-ureidoglycolate, generating urea and glyoxylate. Involved in the utilization of allantoin as nitrogen source. In Rhizobium etli (strain CIAT 652), this protein is Ureidoglycolate lyase.